Consider the following 267-residue polypeptide: Protein COFACTOR ASSEMBLY OF COMPLEX C SUBUNIT B CCB1, chloroplastic (267 aa).

The N-terminal 44 residues, 1 to 44 (MATKLISPPLSCPWVTSREVIIKGLPRRRREWMVTKRNRVSAVT), are a transit peptide targeting the chloroplast. The Lumenal portion of the chain corresponds to 45–84 (AMIVEPLSVVSSSAIQIHQWWEQNPNSLLLMTEATGGYSL). The helical transmembrane segment at 85 to 105 (ASYYTSLGLFVISVPGLWSLI) threads the bilayer. The Stromal portion of the chain corresponds to 106–164 (KRSVKSKIVRKTFVVNDVKKEPKQVAGEILSFFTRKNFNITDRGETITFEGKMVPSRGQ). A helical membrane pass occupies residues 165 to 185 (AALLTFCTCISLASVGLVLTI). Residue threonine 186 is a topological domain, lumenal. Residues 187–207 (VPDFGNNWFFIILLSPLAGVY) form a helical membrane-spanning segment. At 208 to 267 (YWKKASRKEEIKVKMMVGSKGRLDEIVVQGDDVQVEEMRKELQLNEKGMVYVKGLFERSS) the chain is on the stromal side.

Its subcellular location is the plastid. It localises to the chloroplast thylakoid membrane. In terms of biological role, required for the biogenesis and accumulation of native cytochrome b6 in the thylakoid membrane. Controls the conversion of apocytochrome b6 to holocytochrome b6. Required for covalent binding of the c-type heme to cytochrome b6. This Arabidopsis thaliana (Mouse-ear cress) protein is Protein COFACTOR ASSEMBLY OF COMPLEX C SUBUNIT B CCB1, chloroplastic.